A 205-amino-acid chain; its full sequence is Adenylyl-sulfate kinase (205 aa).

31 to 38 serves as a coordination point for ATP; it reads GLSGAGKS. S105 (phosphoserine intermediate) is an active-site residue.

This sequence belongs to the APS kinase family.

It carries out the reaction adenosine 5'-phosphosulfate + ATP = 3'-phosphoadenylyl sulfate + ADP + H(+). The protein operates within sulfur metabolism; hydrogen sulfide biosynthesis; sulfite from sulfate: step 2/3. Its function is as follows. Catalyzes the synthesis of activated sulfate. The chain is Adenylyl-sulfate kinase from Shewanella putrefaciens (strain CN-32 / ATCC BAA-453).